The primary structure comprises 75 residues: Large ribosomal subunit protein uL30 (75 aa).

This sequence belongs to the universal ribosomal protein uL30 family. In terms of assembly, part of the 50S ribosomal subunit.

This is Large ribosomal subunit protein uL30 from Roseiflexus castenholzii (strain DSM 13941 / HLO8).